The following is a 1661-amino-acid chain: ATP-dependent bile acid permease (1661 aa).

The Lumenal portion of the chain corresponds to 1–33 (MHHVLNSTRPDHRFWFYDDVTQYGRTKYLNYYT). A glycan (N-linked (GlcNAc...) asparagine) is linked at Asn6. A helical transmembrane segment spans residues 34 to 54 (PLVLLIFTVLFITYNIWKHYY). Topologically, residues 55–74 (YYDVLHLKQKNPIDELLYSS) are cytoplasmic. The chain crosses the membrane as a helical span at residues 75–95 (TDEDEQSPLINNNTITTNYVD). Topologically, residues 96–133 (NNCTKDALKNRHFSLEKLKSVKVNGEPHGTPEIVRRGF) are lumenal. N-linked (GlcNAc...) asparagine glycosylation occurs at Asn97. Residues 134-154 (IEKSRIILEFFLVLSQVIIHS) form a helical membrane-spanning segment. Topologically, residues 155-166 (FILLHYVNKNPE) are cytoplasmic. The helical transmembrane segment at 167-187 (FTQQGTITGLVEWCALFIIVS) threads the bilayer. The Lumenal portion of the chain corresponds to 188–205 (LRLANVNQNFKFINKYPG). The chain crosses the membrane as a helical span at residues 206 to 226 (NLWSVSFINYLALFISMILPF). Over 227–345 (RSIFIHHINS…VKRKRIFSLN (119 aa)) the chain is Cytoplasmic. A helical transmembrane segment spans residues 346–366 (LFFFFSNYLVLQCFWAFLGSV). The ABC transmembrane type-1 1 domain occupies 354–662 (LVLQCFWAFL…LSDMLSFVVQ (309 aa)). At 367-393 (LSFIPTVLLKRILEYVEDQSSAPSNLA) the chain is on the lumenal side. A helical transmembrane segment spans residues 394 to 414 (WFYVTVMFVGRILVAICQAQA). Over 415-495 (LFFGRRVCIR…AFKVSEICGY (81 aa)) the chain is Cytoplasmic. Residues 445–468 (NKTKPSNEDPQEINDQKSINGDEE) are disordered. The chain crosses the membrane as a helical span at residues 496 to 516 (LHSFLEAFVMTVVALALLYRL). Residues 517 to 519 (LGF) are Lumenal-facing. The chain crosses the membrane as a helical span at residues 520–540 (AAIVGVLIIVAMLPLNYKLAK). Over 541–602 (YIGDLQKKNL…LLLMRSIVWS (62 aa)) the chain is Cytoplasmic. A helical membrane pass occupies residues 603 to 623 (ISSFLWFVTPTIVTAASFAYY). Residues 624 to 644 (IYVQGEVLTTPVAFTALSLFT) lie on the Lumenal side of the membrane. A helical transmembrane segment spans residues 645–665 (LLRDPLDRLSDMLSFVVQSKV). At 666–1053 (SLDRVQDFLN…SWWVRAWASH (388 aa)) the chain is on the cytoplasmic side. The region spanning 694–935 (FAFENSTISW…GLFGEDELVK (242 aa)) is the ABC transporter 1 domain. 729–736 (GPTGSGKT) is an ATP binding site. 3 positions are modified to phosphoserine: Ser936, Ser940, and Ser955. The ABC transmembrane type-1 2 domain occupies 1026-1345 (VSFLASLFLI…LVRLYSEVEM (320 aa)). A helical transmembrane segment spans residues 1054–1074 (NVIAKIIPRAQRAIAFISKKA). Over 1075-1114 (SHLIDWRGSSQISMASAENQPSSGHSTMYYLVLYLIIGFA) the chain is Lumenal. A helical transmembrane segment spans residues 1115 to 1135 (QALLGAGKTILNFVAGINASR). Topologically, residues 1136 to 1178 (KIFNMILNKVLHSKIRFFDATPTGRIMNRFSKDIEAIDQELTP) are cytoplasmic. Residues 1179–1199 (YIQGAFYSLIECLSTVILITF) form a helical membrane-spanning segment. Position 1200 (Ile1200) is a topological domain, lumenal. A helical membrane pass occupies residues 1201–1221 (TPQFLSVAIVVSILYYFVGYF). Residues 1222-1292 (YMAGSRELKR…VANRWLAFRI (71 aa)) lie on the Cytoplasmic side of the membrane. Residues 1293-1313 (DMIGSLVIFGAGLFILFNINN) traverse the membrane as a helical segment. Over 1314–1315 (LD) the chain is Lumenal. Residues 1316–1336 (SGMAGISLTYAISFTEGALWL) traverse the membrane as a helical segment. At 1337–1661 (VRLYSEVEMN…FVEKLNSKKD (325 aa)) the chain is on the cytoplasmic side. The ABC transporter 2 domain occupies 1381–1636 (IEVNDLSLRY…KQSAFYSMCE (256 aa)). Residue 1415 to 1422 (GRTGAGKS) coordinates ATP.

This sequence belongs to the ABC transporter superfamily. ABCC family. Conjugate transporter (TC 3.A.1.208) subfamily.

The protein resides in the vacuole membrane. In terms of biological role, vacuolar class C ABC transporter which regulates the translocation of phosphatidylcholine to the vacuole lumen, the release of lumenal calcium stores, and acts as a negative regulator of vacuole fusion. Exhibits ATP-dependent bile acid transport. In Saccharomyces cerevisiae (strain ATCC 204508 / S288c) (Baker's yeast), this protein is ATP-dependent bile acid permease (YBT1).